The chain runs to 1134 residues: Nck-associated protein 1-like (1134 aa).

Positions 638-671 are disordered; sequence KAKNKKSMKQRQAPRKGEPERDKPGAESHRKNRS. The span at 639 to 651 shows a compositional bias: basic residues; that stretch reads AKNKKSMKQRQAP. The span at 652-666 shows a compositional bias: basic and acidic residues; it reads RKGEPERDKPGAESH. The chain crosses the membrane as a helical span at residues 999 to 1019; sequence LLLIFLAVSLPLLATDPSSFF.

In terms of assembly, in hematopoietic cells, component of the WAVE2 complex composed of ABI1, CYFIP1/SRA1, NCKAP1L/HEM1 and WASF2/WAVE2. Interacts with ARHGAP4, PIK3C3/VPS34 and PPP1R12A/MYPT1. Interacts with mammalian target of rapamycin complex 2 (mTORC2) components, including MTOR and RICTOR. Predominantly expressed in developing and mature hematopoietic cells. Also detected in urogenital tissues, including testis.

It localises to the membrane. Its subcellular location is the cytoplasm. Its function is as follows. Essential hematopoietic-specific regulator of the actin cytoskeleton. Controls lymphocyte development, activation, proliferation and homeostasis, erythrocyte membrane stability, as well as phagocytosis and migration by neutrophils and macrophages. Component of the WAVE2 complex which signals downstream of RAC to stimulate F-actin polymerization. Required for stabilization and/or translation of the WAVE2 complex proteins in hematopoietic cells. Within the WAVE2 complex, enables the cortical actin network to restrain excessive degranulation and granule release by T-cells. Required for efficient T-lymphocyte and neutrophil migration. Exhibits complex cycles of activation and inhibition to generate waves of propagating the assembly with actin. Also involved in mechanisms WAVE independent to regulate myosin and actin polymerization during neutrophil chemotaxis. In T-cells, required for proper mechanistic target of rapamycin complex 2 (mTORC2)-dependent AKT phosphorylation, cell proliferation and cytokine secretion, including that of IL2 and TNF. The protein is Nck-associated protein 1-like of Mus musculus (Mouse).